Here is a 258-residue protein sequence, read N- to C-terminus: Regulatory protein RecX (258 aa).

It belongs to the RecX family.

It is found in the cytoplasm. Functionally, modulates RecA activity. This chain is Regulatory protein RecX, found in Streptococcus pyogenes serotype M2 (strain MGAS10270).